The sequence spans 270 residues: Putative phosphoenolpyruvate synthase regulatory protein (270 aa).

An ADP-binding site is contributed by 150–157 (GVSRCGKT).

This sequence belongs to the pyruvate, phosphate/water dikinase regulatory protein family. PSRP subfamily.

The catalysed reaction is [pyruvate, water dikinase] + ADP = [pyruvate, water dikinase]-phosphate + AMP + H(+). The enzyme catalyses [pyruvate, water dikinase]-phosphate + phosphate + H(+) = [pyruvate, water dikinase] + diphosphate. Its function is as follows. Bifunctional serine/threonine kinase and phosphorylase involved in the regulation of the phosphoenolpyruvate synthase (PEPS) by catalyzing its phosphorylation/dephosphorylation. The chain is Putative phosphoenolpyruvate synthase regulatory protein from Shewanella pealeana (strain ATCC 700345 / ANG-SQ1).